Reading from the N-terminus, the 127-residue chain is Promotilin (127 aa).

Positions 1-25 (MLSRKAVAALLLVHVTAMLASQTEG) are cleaved as a signal peptide. Positions 41–67 (REQNKRLRKSLRVQQRSKAAGRLEPQE) are disordered.

Belongs to the motilin family. As to expression, present in the gut mucosa with the exception of the gastric corpus. Also present in medulla oblongata, nucleus of the solitary tract, hypophysis, spinal cord, hypothalamus, and cerebellum but not in the cerebral cortex.

Its subcellular location is the secreted. Plays an important role in the regulation of interdigestive gastrointestinal motility and indirectly causes rhythmic contraction of duodenal and colonic smooth muscle. The polypeptide is Promotilin (MLN) (Cavia porcellus (Guinea pig)).